A 197-amino-acid polypeptide reads, in one-letter code: Nascent polypeptide-associated complex subunit alpha (197 aa).

Acidic residues predominate over residues 1 to 20 (MAEPVEDSVDEISSEGDSDV). Disordered stretches follow at residues 1–46 (MAEP…RKLL) and 120–154 (GADRGTDSSAAAHASGHDHAHDHDHSHGDCASKAD). The 66-residue stretch at 36-101 (DKNERKSRKL…AKVEDMSQNS (66 aa)) folds into the NAC-A/B domain. The segment covering 134-154 (SGHDHAHDHDHSHGDCASKAD) has biased composition (basic and acidic residues). In terms of domain architecture, UBA spans 158 to 195 (VNQSDIDLVVSQVGCTREQAVEALIKNKGDIVETIMQL).

The protein belongs to the NAC-alpha family.

Functionally, may promote appropriate targeting of ribosome-nascent polypeptide complexes. The polypeptide is Nascent polypeptide-associated complex subunit alpha (Babesia divergens).